A 533-amino-acid chain; its full sequence is Drimenyl diphosphate synthase (533 aa).

4 residues coordinate (2E,6E)-farnesyl diphosphate: arginine 132, lysine 133, glutamine 163, and tryptophan 165. Glutamate 169 lines the Mg(2+) pocket. 5 PFTB repeats span residues 274-316 (VTPM…RRAA), 324-366 (VAEA…AHDP), 372-415 (VDEA…AAHG), 425-466 (AERA…ARGP), and 474-517 (LDRA…FVLL). The active-site Proton donor is aspartate 303. Residue arginine 501 coordinates (2E,6E)-farnesyl diphosphate.

It belongs to the terpene cyclase/mutase family. Mg(2+) serves as cofactor. Ni(2+) is required as a cofactor. It depends on Co(2+) as a cofactor.

It catalyses the reaction (2E,6E)-farnesyl diphosphate = (5S,9S,10S)-drim-7-en-11-yl diphosphate. Catalyzes the cyclization of farnesyl diphosphate (FPP) to drimenyl diphosphate. Cannot use geranylgeranyl diphosphate (GGPP) as substrate. This chain is Drimenyl diphosphate synthase, found in Streptomyces showdoensis.